Consider the following 246-residue polypeptide: MAGHSQFSNIKHRKGAQDAKRSQKFTKLIREITVAAKQGLTDPELNPRLRSAIFSARKENLPKDKIETAIKNAAGNVAGESYEEIQYEGCGPSGAALIVHALTNNRNRTASEIRYIFSRKGGNLGETGCVSYLFDHVGLIVYKAEGINFEDLFNYGIELEVLNVEENNKEELYVITCGVKDFGRVRDAFYTKFGEPELARLSWQPKDLIEVSDKELIDKLSILVEELEDNDDVQYVEGNFIFADKL.

The tract at residues M1–S22 is disordered.

This sequence belongs to the TACO1 family.

Its subcellular location is the cytoplasm. The polypeptide is Probable transcriptional regulatory protein WP1214 (Wolbachia pipientis subsp. Culex pipiens (strain wPip)).